The chain runs to 340 residues: L-threonine 3-dehydrogenase (340 aa).

Residue Cys38 participates in Zn(2+) binding. Residues Thr40 and His43 each act as charge relay system in the active site. Positions 63, 64, 93, 96, 99, and 107 each coordinate Zn(2+). NAD(+) contacts are provided by residues Ile175, Asp195, Arg200, 261–263 (LGI), and 285–286 (IY).

It belongs to the zinc-containing alcohol dehydrogenase family. Homotetramer. Zn(2+) serves as cofactor.

Its subcellular location is the cytoplasm. The catalysed reaction is L-threonine + NAD(+) = (2S)-2-amino-3-oxobutanoate + NADH + H(+). The protein operates within amino-acid degradation; L-threonine degradation via oxydo-reductase pathway; glycine from L-threonine: step 1/2. Its function is as follows. Catalyzes the NAD(+)-dependent oxidation of L-threonine to 2-amino-3-ketobutyrate. This chain is L-threonine 3-dehydrogenase, found in Xanthomonas oryzae pv. oryzae (strain MAFF 311018).